The following is a 216-amino-acid chain: Gas vesicle protein H (216 aa).

The segment at 1–141 is disordered; the sequence is MSPNLNGPGG…IHIETRETDD (141 aa). Acidic residues predominate over residues 15–25; it reads DRPDEPDDSDR. Composition is skewed to basic and acidic residues over residues 38-51, 73-84, and 107-141; these read PDDR…RPSD, DGHRQGHGRIDR, and KPSD…ETDD.

Belongs to the gas vesicle GvpH family. As to quaternary structure, gvpF to GvpM interact with each other in vitro, and may form multi-subunit complex(es). Interacts with GvpC. Might interact with GvpA.

It localises to the gas vesicle. In terms of biological role, proteins GvpF to GvpM might be involved in nucleating gas vesicle formation. A minor component of the gas vesicle. Gas vesicles are hollow, gas filled proteinaceous nanostructures found in some microorganisms. They allow positioning of halobacteria at the optimal depth for growth in the poorly aerated, shallow brine pools of their habitat. Its function is as follows. Expression of a 9.5 kb mc-vac DNA fragment containing 2 divergently transcribed regions (gvpD-gvpE-gvpF-gvpG-gvpH-gvpI-gvpJ-gvpK-gvpL-gvpM and gvpA-gvpC-gvpN-gvpO) allows H.volcanii to produce gas vesicles. This Haloferax mediterranei (strain ATCC 33500 / DSM 1411 / JCM 8866 / NBRC 14739 / NCIMB 2177 / R-4) (Halobacterium mediterranei) protein is Gas vesicle protein H.